We begin with the raw amino-acid sequence, 485 residues long: U4/U6 small nuclear ribonucleoprotein Prp31 homolog (485 aa).

2 disordered regions span residues 1-36 and 329-361; these read MATL…EEDV and IEKW…RRLR. Positions 11–36 are enriched in acidic residues; the sequence is DLDELSDNEAELDENDGDVGKEEEDV. One can recognise a Nop domain in the interval 216-334; that stretch reads IAPNLSAIVG…IRKKIEKWQE (119 aa). Positions 334 to 348 are enriched in pro residues; it reads EPPPARQPKPLPVPD. The span at 352-361 shows a compositional bias: basic residues; it reads KKRRGGRRLR. The short motif at 352-365 is the Nuclear localization signal element; the sequence is KKRRGGRRLRKMKE.

This sequence belongs to the PRP31 family. As to quaternary structure, component of the U4/U6-U5 tri-snRNP complex composed of the U4, U6 and U5 snRNAs and pre-mRNA-splicing factors. Interacts with STA1 and SOP1.

The protein localises to the nucleus. It localises to the cajal body. Its function is as follows. Involved in pre-mRNA splicing. Required for the assembly of the U4/U5/U6 tri-snRNP complex, one of the building blocks of the spliceosome. Functions in association with STA1 and ZOP1 in spliceosome dynamics and pre-mRNA splicing. Required for transcriptional regulation and pre-mRNA splicing of cold-responsive genes, such as LTI78/RD29A, KIN2/COR6.6 or COR15A, especially under cold stress. May play a role in stress response. Involved in transcriptional gene silencing of endogenous transposable elements, independently of the RNA-directed DNA methylation (RdDM) pathway. Seems not to participate in the small RNA biogenesis of the RdDM pathway. The sequence is that of U4/U6 small nuclear ribonucleoprotein Prp31 homolog from Arabidopsis thaliana (Mouse-ear cress).